The sequence spans 424 residues: Bone morphogenetic protein 10 (424 aa).

An N-terminal signal peptide occupies residues 1-21 (MGSLVLTLCALFCLAAYLVSG). Residues 22 to 316 (SPIMNLEQSP…IYDSTARIRR (295 aa)) constitute a propeptide that is removed on maturation. N-linked (GlcNAc...) asparagine glycosylation is found at N67 and N131. Cystine bridges form between C323/C389, C352/C421, and C356/C423.

Belongs to the TGF-beta family. Homodimer; disulfide-linked. Interacts with FBN1 (via N-terminal domain) and FBN2. Interacts with ENG. As to expression, detected in mammary epithelia (at protein level).

The protein localises to the secreted. Required for maintaining the proliferative activity of embryonic cardiomyocytes by preventing premature activation of the negative cell cycle regulator CDKN1C/p57KIP and maintaining the required expression levels of cardiogenic factors such as MEF2C and NKX2-5. Acts as a ligand for ACVRL1/ALK1, BMPR1A/ALK3 and BMPR1B/ALK6, leading to activation of SMAD1, SMAD5 and SMAD8 transcription factors. Inhibits endothelial cell migration and growth. May reduce cell migration and cell matrix adhesion in breast cancer cell lines. The sequence is that of Bone morphogenetic protein 10 (BMP10) from Homo sapiens (Human).